A 283-amino-acid polypeptide reads, in one-letter code: Lysozyme-like protein 7 (283 aa).

The first 18 residues, 1 to 18 (MAHKSIVIFSVLAVLCHS), serve as a signal peptide directing secretion. Positions 53 to 273 (YAYALDIYVQ…AVEEDGKIYA (221 aa)) constitute a Ch-type lysozyme domain.

It belongs to the glycosyl hydrolase 25 family. In terms of tissue distribution, expressed in intestine. Expressed in rectal gland cells and head neurons.

Functionally, plays a role in resistance to Gram-positive bacteria B.thuringiensis and M.nematophilum and Gram-negative bacteria S.boydii or S.flexneri infection and to fungus C.neoformans infection. Plays a role in susceptibility to Gram-negative bacterium S.typhimurium infection. The sequence is that of Lysozyme-like protein 7 from Caenorhabditis elegans.